The following is a 757-amino-acid chain: Polyribonucleotide nucleotidyltransferase (757 aa).

Residues Asp-531 and Asp-537 each coordinate Mg(2+). The KH domain occupies 597–656 (PRVTTIRVPVDKIGEVIGPKGKIINAITEETGAQISIEDDGTVFVGATDGPSAQAAIDRI). Positions 668–737 (GERFLGTVVK…KRGKISLVLV (70 aa)) constitute an S1 motif domain.

It belongs to the polyribonucleotide nucleotidyltransferase family. Requires Mg(2+) as cofactor.

The protein resides in the cytoplasm. It catalyses the reaction RNA(n+1) + phosphate = RNA(n) + a ribonucleoside 5'-diphosphate. Its function is as follows. Involved in mRNA degradation. Catalyzes the phosphorolysis of single-stranded polyribonucleotides processively in the 3'- to 5'-direction. The chain is Polyribonucleotide nucleotidyltransferase from Mycolicibacterium paratuberculosis (strain ATCC BAA-968 / K-10) (Mycobacterium paratuberculosis).